A 392-amino-acid polypeptide reads, in one-letter code: Dihydroorotate dehydrogenase (quinone) (392 aa).

Residues 90 to 94 (AGFDK) and Thr114 each bind FMN. Lys94 is a binding site for substrate. Residue 139–143 (NRMGF) participates in substrate binding. Residues Asn173 and Asn206 each contribute to the FMN site. Asn206 provides a ligand contact to substrate. The active-site Nucleophile is Ser209. Position 211 (Asn211) interacts with substrate. The FMN site is built by Lys243 and Val271. Residue 272–273 (NT) coordinates substrate. Residues Gly301, Gly330, and 351 to 352 (YT) contribute to the FMN site.

Belongs to the dihydroorotate dehydrogenase family. Type 2 subfamily. Monomer. Requires FMN as cofactor.

The protein resides in the cell membrane. The catalysed reaction is (S)-dihydroorotate + a quinone = orotate + a quinol. It participates in pyrimidine metabolism; UMP biosynthesis via de novo pathway; orotate from (S)-dihydroorotate (quinone route): step 1/1. In terms of biological role, catalyzes the conversion of dihydroorotate to orotate with quinone as electron acceptor. This is Dihydroorotate dehydrogenase (quinone) from Prochlorococcus marinus (strain MIT 9313).